Consider the following 470-residue polypeptide: uncharacterized protein (470 aa).

Residues 1–337 (MKFGHDFKRA…SLTAQPLFFQ (337 aa)) form the SPX domain. The interval 118–145 (ASNVPSTPSDSTQQPPTNTLPSVSASSQ) is disordered. Positions 122–136 (PSTPSDSTQQPPTNT) are enriched in low complexity. The segment at 374-413 (CAICSNVAYKPVRLGCSHVFCLHCLIILQKQKVDFCPLCR) adopts an RING-type zinc-finger fold.

It localises to the cytoplasm. This is an uncharacterized protein from Schizosaccharomyces pombe (strain 972 / ATCC 24843) (Fission yeast).